A 783-amino-acid polypeptide reads, in one-letter code: Rho GTPase-activating protein gacR (783 aa).

Residues 138–188 (AKNRFDKARLSFDEASEQFKQLRKKQNNINNEKLLEAEEDLDYATQQFSDI) are a coiled coil. A disordered region spans residues 262-299 (QFEQTNSSRTISLPPPPPPKPTSSTPSSSPSPSPSSSI). Residues 283–299 (TSSTPSSSPSPSPSSSI) show a composition bias toward low complexity. The region spanning 319–509 (MALSTITERE…FIISNFNNIF (191 aa)) is the Rho-GAP domain. Residues 527–539 (GSSGGGGGGGSSG) are compositionally biased toward gly residues. The disordered stretch occupies residues 527-745 (GSSGGGGGGG…TTNSRPLSNS (219 aa)). Low complexity-rich tracts occupy residues 568 to 589 (SVNT…ASSA), 599 to 630 (PSSS…NINP), 641 to 651 (PKKISSSSNSL), and 661 to 698 (SIPE…RSST). Over residues 706–738 (NRVSMYLQNSNTGVPLPSQKPQRVISNNNTTTN) the composition is skewed to polar residues.

The protein resides in the cytoplasm. Rho GTPase-activating protein involved in the signal transduction pathway. The chain is Rho GTPase-activating protein gacR (gacR) from Dictyostelium discoideum (Social amoeba).